Consider the following 365-residue polypeptide: Terpene cyclase 4 (365 aa).

A compositionally biased stretch (pro residues) spans 1-11 (MVPSLITPPPS). Residues 1 to 20 (MVPSLITPPPSRSGEATPQK) form a disordered region. Residues Asp-118, Asn-260, and Ser-264 each contribute to the Mg(2+) site. The short motif at 118-122 (DDPFD) is the D(D/E)XX(D/E) motif element. The NSE motif signature appears at 260 to 268 (NDLCSYRKD). The WxxxxxRY motif motif lies at 341-348 (WSLYTFRY). (2E,6E)-farnesyl diphosphate-binding residues include Arg-347 and Tyr-348.

This sequence belongs to the terpene synthase family. As to quaternary structure, homodimer. Mg(2+) serves as cofactor.

It catalyses the reaction (2E,6E)-farnesyl diphosphate + H2O = koraiol + diphosphate. It participates in sesquiterpene biosynthesis. Its function is as follows. Terpene cyclase that catalyzes the cyclization of farnesyl diphosphate (FPP) to the sesquiterpene koraiol. The protein is Terpene cyclase 4 of Gibberella fujikuroi (strain CBS 195.34 / IMI 58289 / NRRL A-6831) (Bakanae and foot rot disease fungus).